The following is a 181-amino-acid chain: Ribosome-recycling factor (181 aa).

The disordered stretch occupies residues 135-160; that stretch reads MDDIKKDKDMPEDDARKAEDQTQKLT.

This sequence belongs to the RRF family.

The protein localises to the cytoplasm. Responsible for the release of ribosomes from messenger RNA at the termination of protein biosynthesis. May increase the efficiency of translation by recycling ribosomes from one round of translation to another. The sequence is that of Ribosome-recycling factor from Leuconostoc mesenteroides subsp. mesenteroides (strain ATCC 8293 / DSM 20343 / BCRC 11652 / CCM 1803 / JCM 6124 / NCDO 523 / NBRC 100496 / NCIMB 8023 / NCTC 12954 / NRRL B-1118 / 37Y).